Reading from the N-terminus, the 149-residue chain is Ribonuclease HI (149 aa).

The RNase H type-1 domain occupies 1 to 142 (MTPKVTIYTD…ADALANEGLR (142 aa)). 4 residues coordinate Mg(2+): Asp10, Glu48, Asp70, and Asp134.

It belongs to the RNase H family. As to quaternary structure, monomer. Mg(2+) is required as a cofactor.

The protein resides in the cytoplasm. The catalysed reaction is Endonucleolytic cleavage to 5'-phosphomonoester.. Functionally, endonuclease that specifically degrades the RNA of RNA-DNA hybrids. This is Ribonuclease HI from Caulobacter vibrioides (strain ATCC 19089 / CIP 103742 / CB 15) (Caulobacter crescentus).